Reading from the N-terminus, the 283-residue chain is uncharacterized protein (283 aa).

The FAD-binding FR-type domain occupies 4–131; the sequence is RPLHAFEVVA…MGPGGAYAPD (128 aa).

This is an uncharacterized protein from Mycobacterium bovis (strain ATCC BAA-935 / AF2122/97).